The chain runs to 457 residues: PDZ and LIM domain protein 7 (457 aa).

Residues 1–85 (MDSFKVVLEG…RLSLGLSRAQ (85 aa)) enclose the PDZ domain. A Phosphoserine modification is found at Ser78. 2 disordered regions span residues 82–166 (SRAQ…QSRS) and 186–226 (FMKK…PWAV). Thr96 carries the phosphothreonine modification. Arg103 carries the asymmetric dimethylarginine modification. A Phosphoserine modification is found at Ser111. Over residues 126–135 (DSTLRQNGQL) the composition is skewed to polar residues. Positions 144-157 (SKQRLMEDTEDWRP) are enriched in basic and acidic residues. Ser247 carries the post-translational modification Phosphoserine. LIM zinc-binding domains are found at residues 280–338 (PVCH…VRYA), 339–398 (PNCA…MFGT), and 399–457 (KCRG…FSHV).

In terms of assembly, specifically binds via its LIM zinc-binding 3 domain (LIM 3) domain to endocytic codes of INSR, but not with those of IGF1R, LDLR, TFRC, or EGFR. Interacts with various PKC isoforms through the LIM zinc-binding domains. Binds to RET in a phosphorylation-independent manner via its LIM zinc-binding domain 2 (LIM 2). Probably part of a complex with SHC and the RET dimer. Interacts with TPM2, TBX4 and TBX5.

The protein resides in the cytoplasm. It localises to the cytoskeleton. In terms of biological role, may function as a scaffold on which the coordinated assembly of proteins can occur. May play a role as an adapter that, via its PDZ domain, localizes LIM-binding proteins to actin filaments of both skeletal muscle and nonmuscle tissues. Involved in both of the two fundamental mechanisms of bone formation, direct bone formation (e.g. embryonic flat bones mandible and cranium), and endochondral bone formation (e.g. embryonic long bone development). Plays a role during fracture repair. Involved in BMP6 signaling pathway. The sequence is that of PDZ and LIM domain protein 7 (Pdlim7) from Mus musculus (Mouse).